The chain runs to 419 residues: UDP-N-acetylglucosamine 1-carboxyvinyltransferase 2 (419 aa).

24-25 serves as a coordination point for phosphoenolpyruvate; it reads KN. Arg94 provides a ligand contact to UDP-N-acetyl-alpha-D-glucosamine. The active-site Proton donor is Cys118. Cys118 carries the 2-(S-cysteinyl)pyruvic acid O-phosphothioketal modification. UDP-N-acetyl-alpha-D-glucosamine contacts are provided by residues 123–127, Asp307, and Ile329; that span reads RPIDQ.

This sequence belongs to the EPSP synthase family. MurA subfamily.

It is found in the cytoplasm. It catalyses the reaction phosphoenolpyruvate + UDP-N-acetyl-alpha-D-glucosamine = UDP-N-acetyl-3-O-(1-carboxyvinyl)-alpha-D-glucosamine + phosphate. Its pathway is cell wall biogenesis; peptidoglycan biosynthesis. In terms of biological role, cell wall formation. Adds enolpyruvyl to UDP-N-acetylglucosamine. This chain is UDP-N-acetylglucosamine 1-carboxyvinyltransferase 2, found in Staphylococcus epidermidis (strain ATCC 12228 / FDA PCI 1200).